A 395-amino-acid polypeptide reads, in one-letter code: Major outer membrane protein P.IA (395 aa).

The first 19 residues, 1-19 (MRKKLTALVLSALPLAAVA), serve as a signal peptide directing secretion.

Belongs to the Gram-negative porin family. Homotrimer.

The protein localises to the cell outer membrane. Its function is as follows. Serves as a slightly cation selective porin. Major antigen on the gonococcal cell surface and it may have pathogenic properties in addition to its porin activity. The sequence is that of Major outer membrane protein P.IA (porA) from Neisseria meningitidis serogroup A / serotype 4A (strain DSM 15465 / Z2491).